Here is a 469-residue protein sequence, read N- to C-terminus: Phosphoglucosamine mutase (469 aa).

The active-site Phosphoserine intermediate is Ser-117. Ser-117, Asp-263, Asp-265, and Asp-267 together coordinate Mg(2+). Ser-117 bears the Phosphoserine mark.

The protein belongs to the phosphohexose mutase family. Mg(2+) is required as a cofactor. Activated by phosphorylation.

It carries out the reaction alpha-D-glucosamine 1-phosphate = D-glucosamine 6-phosphate. In terms of biological role, catalyzes the conversion of glucosamine-6-phosphate to glucosamine-1-phosphate. This Anaeromyxobacter sp. (strain Fw109-5) protein is Phosphoglucosamine mutase.